A 464-amino-acid chain; its full sequence is 3-isopropylmalate dehydratase large subunit (464 aa).

[4Fe-4S] cluster contacts are provided by cysteine 337, cysteine 397, and cysteine 400.

It belongs to the aconitase/IPM isomerase family. LeuC type 1 subfamily. Heterodimer of LeuC and LeuD. It depends on [4Fe-4S] cluster as a cofactor.

The enzyme catalyses (2R,3S)-3-isopropylmalate = (2S)-2-isopropylmalate. The protein operates within amino-acid biosynthesis; L-leucine biosynthesis; L-leucine from 3-methyl-2-oxobutanoate: step 2/4. In terms of biological role, catalyzes the isomerization between 2-isopropylmalate and 3-isopropylmalate, via the formation of 2-isopropylmaleate. The sequence is that of 3-isopropylmalate dehydratase large subunit from Bacillus cereus (strain AH187).